The sequence spans 162 residues: Large ribosomal subunit protein bL17 (162 aa).

Residues 125–140 (AAKEAPAKEVAEEKAA) show a composition bias toward basic and acidic residues. The segment at 125–162 (AAKEAPAKEVAEEKAAKPAKKAAPKKAEKEEAEDAAEA) is disordered.

This sequence belongs to the bacterial ribosomal protein bL17 family. Part of the 50S ribosomal subunit. Contacts protein L32.

This chain is Large ribosomal subunit protein bL17, found in Oleidesulfovibrio alaskensis (strain ATCC BAA-1058 / DSM 17464 / G20) (Desulfovibrio alaskensis).